The sequence spans 199 residues: Recombination protein RecR (199 aa).

The segment at 58–73 (CKKCFNFTSEDECEIC) adopts a C4-type zinc-finger fold. Residues 81 to 175 (KLICVVAETK…KVTRIAYGLP (95 aa)) form the Toprim domain.

This sequence belongs to the RecR family.

May play a role in DNA repair. It seems to be involved in an RecBC-independent recombinational process of DNA repair. It may act with RecF and RecO. In Prochlorococcus marinus (strain MIT 9312), this protein is Recombination protein RecR.